A 252-amino-acid chain; its full sequence is Hydroxyacylglutathione hydrolase (252 aa).

H54, H56, D58, H59, H113, D132, and H170 together coordinate Zn(2+).

The protein belongs to the metallo-beta-lactamase superfamily. Glyoxalase II family. In terms of assembly, monomer. Zn(2+) is required as a cofactor.

The catalysed reaction is an S-(2-hydroxyacyl)glutathione + H2O = a 2-hydroxy carboxylate + glutathione + H(+). The protein operates within secondary metabolite metabolism; methylglyoxal degradation; (R)-lactate from methylglyoxal: step 2/2. In terms of biological role, thiolesterase that catalyzes the hydrolysis of S-D-lactoyl-glutathione to form glutathione and D-lactic acid. The protein is Hydroxyacylglutathione hydrolase of Gloeobacter violaceus (strain ATCC 29082 / PCC 7421).